The primary structure comprises 851 residues: Venom phosphodiesterase 1 (851 aa).

Residues 1 to 23 (MIQQKVLFISLVAVTLGLGLGLG) form the signal peptide. SMB domains are found at residues 30–73 (PQVS…VLPT) and 74–118 (QSWS…GETS). 16 disulfide bridges follow: Cys-34/Cys-38, Cys-34/Cys-51, Cys-38/Cys-69, Cys-49/Cys-51, Cys-49/Cys-62, Cys-55/Cys-61, Cys-62/Cys-69, Cys-78/Cys-83, Cys-78/Cys-95, Cys-83/Cys-113, Cys-93/Cys-95, Cys-93/Cys-106, Cys-99/Cys-105, Cys-106/Cys-113, Cys-124/Cys-170, and Cys-132/Cys-344. The N-linked (GlcNAc...) asparagine glycan is linked to Asn-39. The Cell attachment site motif lies at 58 to 60 (RQA). The a divalent metal cation site is built by Asp-147 and Thr-185. The active-site AMP-threonine intermediate is Thr-185. N-linked (GlcNAc...) asparagine glycosylation is found at Asn-216, Asn-259, and Asn-270. Lys-271 contacts AMP. The a divalent metal cation site is built by Asp-305, His-309, Asp-352, and His-353. His-309 provides a ligand contact to AMP. 6 disulfides stabilise this stretch: Cys-360–Cys-457, Cys-408–Cys-793, Cys-541–Cys-599, Cys-554–Cys-654, Cys-556–Cys-639, and Cys-762–Cys-772. N-linked (GlcNAc...) asparagine glycosylation occurs at Asn-405. His-462 lines the a divalent metal cation pocket. 4 N-linked (GlcNAc...) asparagine glycosylation sites follow: Asn-512, Asn-594, Asn-674, and Asn-745.

This sequence belongs to the nucleotide pyrophosphatase/phosphodiesterase family. Monomer cleaved in two subunits; disulfide-linked. Is synthesized as a single-chain protein and is subsequently cleaved to form a two-subunit protein held together with disulfide bonds. Requires a divalent metal cation as cofactor. Expressed by venom gland.

It localises to the secreted. The catalysed reaction is ADP + H2O = AMP + phosphate + H(+). Its function is as follows. Hydrolyzes ADP with high activity. Shows weak or no activity on 5'-AMP, 5'-GMP, 3'-AMP, ATP, cAMP, and cGMP. Is devoid of monophosphatase and proteinase activities. Dose-dependently inhibits platelet aggregation induced by ADP and collagen. The polypeptide is Venom phosphodiesterase 1 (Crotalus adamanteus (Eastern diamondback rattlesnake)).